Here is a 66-residue protein sequence, read N- to C-terminus: Large ribosomal subunit protein bL32 (66 aa).

Belongs to the bacterial ribosomal protein bL32 family.

The protein is Large ribosomal subunit protein bL32 of Rickettsia bellii (strain OSU 85-389).